The following is a 68-amino-acid chain: Large ribosomal subunit protein bL31 (68 aa).

The Zn(2+) site is built by C16, C18, C36, and C39.

Belongs to the bacterial ribosomal protein bL31 family. Type A subfamily. As to quaternary structure, part of the 50S ribosomal subunit. Requires Zn(2+) as cofactor.

Binds the 23S rRNA. This Dictyoglomus turgidum (strain DSM 6724 / Z-1310) protein is Large ribosomal subunit protein bL31.